The chain runs to 215 residues: Pyrrolidone-carboxylate peptidase (215 aa).

Residues Glu-80, Cys-143, and His-167 contribute to the active site.

The protein belongs to the peptidase C15 family. As to quaternary structure, homotetramer.

It is found in the cytoplasm. The enzyme catalyses Release of an N-terminal pyroglutamyl group from a polypeptide, the second amino acid generally not being Pro.. In terms of biological role, removes 5-oxoproline from various penultimate amino acid residues except L-proline. This Bacillus mycoides (strain KBAB4) (Bacillus weihenstephanensis) protein is Pyrrolidone-carboxylate peptidase.